The following is a 460-amino-acid chain: Solute carrier family 52, riboflavin transporter, member 3 (460 aa).

At 1–6 the chain is on the cytoplasmic side; that stretch reads MAFLTH. The helical transmembrane segment at 7 to 27 threads the bilayer; the sequence is LLVCVFGMGSWVAINGLWVEL. Topologically, residues 28–37 are extracellular; that stretch reads PLLVTELPEA. Residues 38 to 58 traverse the membrane as a helical segment; the sequence is WYLPSYLTVVIQLANIGPLLV. Residues 59–71 are Cytoplasmic-facing; sequence TLMHRFRPGCLSE. A helical membrane pass occupies residues 72 to 92; the sequence is VPVIFLILCVGTAACILLAFL. Residues 93 to 105 lie on the Extracellular side of the membrane; the sequence is WNVTSWIQGGQHS. N-linked (GlcNAc...) asparagine glycosylation is present at Asn-94. Residues 106–126 traverse the membrane as a helical segment; that stretch reads VAFIVLTFFLALVDCTSSVTF. Residues 127–137 are Cytoplasmic-facing; it reads LPFMSQLPTYY. The chain crosses the membrane as a helical span at residues 138-158; sequence LTTFFIGEGLSGLLPALVALV. The Extracellular segment spans residues 159 to 211; the sequence is QGSGITTCVNVTETPGTTLNTMETPITQGNLSPSLPSPSWHQESRYLAPRFSP. Residue Asn-168 is glycosylated (N-linked (GlcNAc...) asparagine). The helical transmembrane segment at 212–232 threads the bilayer; sequence LLFFLLLSFLTGCCLVAFFLL. Topologically, residues 233–291 are cytoplasmic; it reads QRQPWGRQGSIEDLLHSQVTLHSIRPRDTEDTSSLGAPVSSPGKGSVEASVASLRPAQL. Ser-242 and Ser-266 each carry phosphoserine. A helical transmembrane segment spans residues 292 to 312; that stretch reads AFIYSVVAFVNALTNGVLPSV. The Extracellular portion of the chain corresponds to 313–326; it reads QTYSCLPYGPVAYH. A helical transmembrane segment spans residues 327–347; sequence LSATLSSVASPLACFLPIFLP. At 348–350 the chain is on the cytoplasmic side; the sequence is NRS. A helical transmembrane segment spans residues 351–371; it reads LLFLGVLTVLGTGFGAYNMAM. Residues 372-387 are Extracellular-facing; that stretch reads AAMSPCPVLQGHWGGE. Cysteines 377 and 454 form a disulfide. A helical membrane pass occupies residues 388 to 408; sequence VLIVLSWVLFAACLSYVKVML. The Cytoplasmic portion of the chain corresponds to 409–418; the sequence is GVILRDRSRS. A helical membrane pass occupies residues 419–439; the sequence is ALLWCGAAVQLGSLIGALLMF. Residues 440-460 lie on the Extracellular side of the membrane; that stretch reads PLVNVLKLFSSADYCSLDCSV.

This sequence belongs to the riboflavin transporter family. As to expression, within the small intestine, it is particularly expressed in the jujenum and the ileum. Almost negligible expression in the stomach, duodenum, and large intestine.

The protein resides in the cell membrane. The catalysed reaction is riboflavin(in) = riboflavin(out). In terms of biological role, plasma membrane transporter mediating the uptake by cells of the water soluble vitamin B2/riboflavin that plays a key role in biochemical oxidation-reduction reactions of the carbohydrate, lipid, and amino acid metabolism. The polypeptide is Solute carrier family 52, riboflavin transporter, member 3 (Slc52a3) (Mus musculus (Mouse)).